The chain runs to 528 residues: Major facilitator superfamily multidrug transporter mdr3 (528 aa).

The segment at 1-37 (MLAMAASAEETNRQSNAGRRSVISPSEAPPEAEQSDV) is disordered. The next 7 helical transmembrane spans lie at 50–70 (FILILCSTQLFVQGAFGYILI), 91–111 (WHVGGYSLTVGTFILIAGKLG), 119–139 (ILVLGWAWFGVWSVIGGCSAF), 149–169 (ARALQGIGPALLLPNALAIAG), 180–200 (MIFSAFAVAAPLGCFTAGVVG), 211–231 (WVMWTYSIGCFIIAAVGLWVI), and 241–261 (AATLQFDYIGSVLGVAGLLLL). Asparagine 262 carries an N-linked (GlcNAc...) asparagine glycan. A run of 5 helical transmembrane segments spans residues 272–292 (GWSTPYVYVLLIGGFLVLGLF), 340–360 (VITSGWLMAIACAAFLGGCIL), 375–395 (FWSFVIMAWGMDISFPASTTI), 410–430 (SLVNTVINYSIAIGLGIAGTV), and 448–468 (ALWSSVGLAALAFGIALVFAV).

This sequence belongs to the major facilitator superfamily.

Its subcellular location is the cell membrane. In terms of biological role, major facilitator superfamily transporter that confers resistance to azoles such as itraconazole. The chain is Major facilitator superfamily multidrug transporter mdr3 from Aspergillus fumigatus (strain ATCC MYA-4609 / CBS 101355 / FGSC A1100 / Af293) (Neosartorya fumigata).